The following is a 348-amino-acid chain: Fructose-1,6-bisphosphatase class 1 (348 aa).

Mg(2+)-binding residues include E92, D111, L113, and D114. Residues 114 to 117 and N204 each bind substrate; that span reads DGSS. E276 contributes to the Mg(2+) binding site.

Belongs to the FBPase class 1 family. As to quaternary structure, homotetramer. Mg(2+) is required as a cofactor.

It is found in the cytoplasm. It catalyses the reaction beta-D-fructose 1,6-bisphosphate + H2O = beta-D-fructose 6-phosphate + phosphate. It functions in the pathway carbohydrate biosynthesis; gluconeogenesis. The sequence is that of Fructose-1,6-bisphosphatase class 1 from Methylorubrum populi (strain ATCC BAA-705 / NCIMB 13946 / BJ001) (Methylobacterium populi).